Here is a 302-residue protein sequence, read N- to C-terminus: Heme A synthase (302 aa).

Topologically, residues 1–8 are cytoplasmic; it reads MFSKKNLK. Residues 9–29 traverse the membrane as a helical segment; sequence WLSVLATVIMAFVQLGGALVT. The Extracellular segment spans residues 30–67; the sequence is KTGSADGCGSDWPLCHGAFLPQNLPIQTLIELSHRAVS. A disulfide bond links Cys-37 and Cys-44. Glu-60 is an active-site residue. Position 63 (His-63) interacts with heme o. A helical transmembrane segment spans residues 68–88; it reads GLSLIVVLWLVIVAWKHIGYI. The Cytoplasmic segment spans residues 89 to 93; it reads KEVKP. The chain crosses the membrane as a helical span at residues 94–114; sequence LSCISVGFLLIQALVGAAAVM. Residues 115–122 are Extracellular-facing; that stretch reads WQQNAYVL. Residues 123–143 traverse the membrane as a helical segment; that stretch reads ALHFGISLISFSSVFVLTLII. His-125 contributes to the heme o binding site. The Cytoplasmic segment spans residues 144 to 161; it reads YEVDRKYEADELFIRKPL. Residues 162 to 182 form a helical membrane-spanning segment; the sequence is RIYTWIMALIVYMTIYTGALV. At 183 to 215 the chain is on the extracellular side; sequence RHKEASLAYGQWPLPFNDLMPHNVQDWVNLTHR. His-214 contacts heme b. A helical membrane pass occupies residues 216–236; it reads GMALIAFIWILITFIHAVNNY. At 237-244 the chain is on the cytoplasmic side; it reads RENRTIRY. A helical membrane pass occupies residues 245–265; that stretch reads GYTAAFILVILQVTTGALSII. Residues 266-271 lie on the Extracellular side of the membrane; it reads TEVNLF. Residues 272-292 form a helical membrane-spanning segment; it reads IALLHALFITLLFGLIAYFII. His-276 lines the heme b pocket. Over 293-302 the chain is Cytoplasmic; it reads LMLRTIRSGG.

The protein belongs to the COX15/CtaA family. Type 1 subfamily. In terms of assembly, interacts with CtaB. Requires heme b as cofactor.

It localises to the cell membrane. The enzyme catalyses Fe(II)-heme o + 2 A + H2O = Fe(II)-heme a + 2 AH2. It participates in porphyrin-containing compound metabolism; heme A biosynthesis; heme A from heme O: step 1/1. Catalyzes the conversion of heme O to heme A by two successive hydroxylations of the methyl group at C8. The first hydroxylation forms heme I, the second hydroxylation results in an unstable dihydroxymethyl group, which spontaneously dehydrates, resulting in the formyl group of heme A. The chain is Heme A synthase from Staphylococcus saprophyticus subsp. saprophyticus (strain ATCC 15305 / DSM 20229 / NCIMB 8711 / NCTC 7292 / S-41).